We begin with the raw amino-acid sequence, 46 residues long: Large ribosomal subunit protein bL34 (46 aa).

It belongs to the bacterial ribosomal protein bL34 family.

In Trichodesmium erythraeum (strain IMS101), this protein is Large ribosomal subunit protein bL34.